The primary structure comprises 125 residues: Large ribosomal subunit protein eL31 (125 aa).

The protein belongs to the eukaryotic ribosomal protein eL31 family. In terms of assembly, component of the large ribosomal subunit.

It localises to the cytoplasm. In terms of biological role, component of the large ribosomal subunit. The ribosome is a large ribonucleoprotein complex responsible for the synthesis of proteins in the cell. This Ictalurus punctatus (Channel catfish) protein is Large ribosomal subunit protein eL31 (rpl31).